Here is a 523-residue protein sequence, read N- to C-terminus: Pentatricopeptide repeat-containing protein At3g21470 (523 aa).

PPR repeat units follow at residues 10-43 (GEFH…RGVY), 44-79 (FPGW…GVCS), 80-114 (DVMV…NVAT), 115-141 (WNAM…ISVC), 143-173 (NTVT…MPFE), 176-210 (NVKA…NAFV), 211-237 (WSLM…VFAR), 238-272 (DLVI…GYEP), 273-307 (DAVT…GIEL), 308-338 (NQFV…ISVR), 339-373 (SVAC…DLKP), 374-408 (DEIT…DVKP), and 409-439 (NVKH…MHVK). The tract at residues 444-523 (VLGALLGACK…SPGLSSLVLT (80 aa)) is type E motif.

The protein belongs to the PPR family. PCMP-E subfamily.

This Arabidopsis thaliana (Mouse-ear cress) protein is Pentatricopeptide repeat-containing protein At3g21470 (PCMP-E29).